Reading from the N-terminus, the 375-residue chain is Formate dehydrogenase (375 aa).

Residues I94 and N120 each coordinate substrate. NAD(+)-binding positions include 175 to 176 (RI), D196, 231 to 235 (PLHEK), T257, D283, 312 to 315 (HMSG), and S358.

It belongs to the D-isomer specific 2-hydroxyacid dehydrogenase family. FDH subfamily. As to quaternary structure, homodimer.

The protein resides in the cytoplasm. It carries out the reaction formate + NAD(+) = CO2 + NADH. Catalyzes the NAD(+)-dependent oxidation of formate to carbon dioxide. Formate oxidation is the final step in the methanol oxidation pathway in methylotrophic microorganisms. Has a role in the detoxification of exogenous formate in non-methylotrophic organisms. In Neurospora crassa (strain ATCC 24698 / 74-OR23-1A / CBS 708.71 / DSM 1257 / FGSC 987), this protein is Formate dehydrogenase.